The primary structure comprises 746 residues: Polyphosphate kinase (746 aa).

Residues 1-17 (MRQPNTQAEAQHTQPSV) are compositionally biased toward polar residues. Positions 1 to 60 (MRQPNTQAEAQHTQPSVGSIAAHRPNTVAATVSGLEPDIDADLDAYEESEESQDGGARLP) are disordered. Positions 37 to 53 (PDIDADLDAYEESEESQ) are enriched in acidic residues. Asn102 lines the ATP pocket. Mg(2+)-binding residues include Arg429 and Arg459. Catalysis depends on His489, which acts as the Phosphohistidine intermediate. ATP contacts are provided by Tyr522, Arg618, and His646.

Belongs to the polyphosphate kinase 1 (PPK1) family. Requires Mg(2+) as cofactor. An intermediate of this reaction is the autophosphorylated ppk in which a phosphate is covalently linked to a histidine residue through a N-P bond.

It carries out the reaction [phosphate](n) + ATP = [phosphate](n+1) + ADP. Catalyzes the reversible transfer of the terminal phosphate of ATP to form a long-chain polyphosphate (polyP). The sequence is that of Polyphosphate kinase from Streptomyces coelicolor (strain ATCC BAA-471 / A3(2) / M145).